Here is a 238-residue protein sequence, read N- to C-terminus: Purine nucleoside phosphorylase DeoD-type (238 aa).

An a purine D-ribonucleoside-binding site is contributed by H4. Residues G20, R24, R43, and 87 to 90 (RVGT) contribute to the phosphate site. A purine D-ribonucleoside contacts are provided by residues 179 to 181 (EME) and 203 to 204 (SN).

Belongs to the PNP/UDP phosphorylase family. In terms of assembly, homohexamer; trimer of homodimers.

The catalysed reaction is a purine D-ribonucleoside + phosphate = a purine nucleobase + alpha-D-ribose 1-phosphate. The enzyme catalyses a purine 2'-deoxy-D-ribonucleoside + phosphate = a purine nucleobase + 2-deoxy-alpha-D-ribose 1-phosphate. Functionally, catalyzes the reversible phosphorolytic breakdown of the N-glycosidic bond in the beta-(deoxy)ribonucleoside molecules, with the formation of the corresponding free purine bases and pentose-1-phosphate. The protein is Purine nucleoside phosphorylase DeoD-type of Lacticaseibacillus casei (strain BL23) (Lactobacillus casei).